Reading from the N-terminus, the 188-residue chain is Ion-translocating oxidoreductase complex subunit B (188 aa).

The interval Met1 to Ala23 is hydrophobic. The region spanning Glu29–Thr88 is the 4Fe-4S domain. Residues Cys46, Cys49, Cys54, Cys71, Cys113, Cys116, Cys119, Cys123, Cys143, Cys146, Cys149, and Cys153 each coordinate [4Fe-4S] cluster. 2 4Fe-4S ferredoxin-type domains span residues Thr104–Arg133 and Gln134–Lys163.

The protein belongs to the 4Fe4S bacterial-type ferredoxin family. RnfB subfamily. As to quaternary structure, the complex is composed of six subunits: RnfA, RnfB, RnfC, RnfD, RnfE and RnfG. Requires [4Fe-4S] cluster as cofactor.

Its subcellular location is the cellular chromatophore membrane. Part of a membrane-bound complex that couples electron transfer with translocation of ions across the membrane. This Cereibacter sphaeroides (strain ATCC 17023 / DSM 158 / JCM 6121 / CCUG 31486 / LMG 2827 / NBRC 12203 / NCIMB 8253 / ATH 2.4.1.) (Rhodobacter sphaeroides) protein is Ion-translocating oxidoreductase complex subunit B.